Here is a 169-residue protein sequence, read N- to C-terminus: Putative 3-methyladenine DNA glycosylase (169 aa).

Belongs to the DNA glycosylase MPG family.

The sequence is that of Putative 3-methyladenine DNA glycosylase from Wolbachia sp. subsp. Brugia malayi (strain TRS).